The primary structure comprises 674 residues: Xaa-Pro aminopeptidase 2 (674 aa).

Positions 1–21 are cleaved as a signal peptide; the sequence is MARAHWGCCPWLVLLCACAWG. 3 N-linked (GlcNAc...) asparagine glycosylation sites follow: asparagine 35, asparagine 49, and asparagine 65. Residue arginine 116 participates in substrate binding. N-linked (GlcNAc...) asparagine glycans are attached at residues asparagine 278 and asparagine 291. Residue histidine 430 participates in substrate binding. Zn(2+) contacts are provided by aspartate 450, aspartate 461, and histidine 524. Substrate-binding residues include histidine 524, histidine 533, and glutamate 555. Zn(2+) contacts are provided by glutamate 555 and glutamate 569. The GPI-anchor amidated alanine moiety is linked to residue alanine 649. Residues 650–674 constitute a propeptide, removed in mature form; it reads ARAPDTASWASVLVVSTLAILGWSV.

It belongs to the peptidase M24B family. As to quaternary structure, homotrimer. Zn(2+) serves as cofactor. In terms of processing, N-glycosylated. As to expression, expressed in kidney, lung, heart, placenta, liver, small intestine and colon. No expression in brain, skeletal muscle, pancreas, spleen, thymus, prostate, testis and ovary.

It is found in the cell membrane. The catalysed reaction is Release of any N-terminal amino acid, including proline, that is linked to proline, even from a dipeptide or tripeptide.. Its activity is regulated as follows. Inhibited by apstatin and the chelating agent 1,10-phenanthroline. Also inhibited by high concentrations of Zn(2+). Not significantly inhibited by bestatin or phosphoramidon. Membrane-bound metalloprotease which catalyzes the removal of a penultimate prolyl residue from the N-termini of peptides, such as Arg-Pro-Pro. May play a role in the metabolism of the vasodilator bradykinin. This chain is Xaa-Pro aminopeptidase 2 (XPNPEP2), found in Homo sapiens (Human).